The chain runs to 198 residues: Peptide methionine sulfoxide reductase MsrA 2 (198 aa).

C32 is a catalytic residue.

It belongs to the MsrA Met sulfoxide reductase family.

It carries out the reaction L-methionyl-[protein] + [thioredoxin]-disulfide + H2O = L-methionyl-(S)-S-oxide-[protein] + [thioredoxin]-dithiol. The enzyme catalyses [thioredoxin]-disulfide + L-methionine + H2O = L-methionine (S)-S-oxide + [thioredoxin]-dithiol. Its function is as follows. Has an important function as a repair enzyme for proteins that have been inactivated by oxidation. Catalyzes the reversible oxidation-reduction of methionine sulfoxide in proteins to methionine. This is Peptide methionine sulfoxide reductase MsrA 2 (msrA2) from Rhizobium meliloti (strain 1021) (Ensifer meliloti).